We begin with the raw amino-acid sequence, 178 residues long: Protein PilI (178 aa).

Residues 34–173 enclose the CheW-like domain; it reads SWSGIGFRMG…PHALAQHQGF (140 aa).

In terms of biological role, may be a part of a signal-transduction system that regulates twitching motility by controlling pilus function (extension and retraction). This chain is Protein PilI (pilI), found in Pseudomonas aeruginosa (strain ATCC 15692 / DSM 22644 / CIP 104116 / JCM 14847 / LMG 12228 / 1C / PRS 101 / PAO1).